The following is a 609-amino-acid chain: Snake venom metalloproteinase-disintegrin-like mocarhagin (609 aa).

A signal peptide spans 1-20; that stretch reads MIQALLVAICLAVFPYQGSS. The propeptide occupies 21–191; sequence IILESGNVND…DEPIEKSSQL (171 aa). The region spanning 205-400 is the Peptidase M12B domain; sequence KYIEFYVVVD…DRPQCILNKP (196 aa). The Ca(2+) site is built by Glu208 and Asp292. Asn303 is a glycosylation site (N-linked (GlcNAc...) asparagine). 3 disulfides stabilise this stretch: Cys316–Cys395, Cys356–Cys379, and Cys358–Cys363. The Zn(2+) site is built by His341 and His345. Residues Cys395, Asn398, Val410, Asn413, Phe415, Glu417, Glu420, and Asp423 each coordinate Ca(2+). In terms of domain architecture, Disintegrin spans 408–494; the sequence is PPVCGNYFVE…KCPKDSFQRN (87 aa). Intrachain disulfides connect Cys411-Cys440, Cys422-Cys435, Cys424-Cys430, Cys434-Cys457, Cys448-Cys454, Cys453-Cys479, Cys466-Cys486, Cys473-Cys505, Cys498-Cys510, Cys517-Cys567, Cys532-Cys575, Cys545-Cys555, Cys562-Cys601, and Cys595-Cys606. A D/ECD-tripeptide motif is present at residues 472 to 474; the sequence is DCD. N-linked (GlcNAc...) asparagine glycosylation occurs at Asn507.

It belongs to the venom metalloproteinase (M12B) family. P-III subfamily. P-IIIa sub-subfamily. As to quaternary structure, monomer. Requires Zn(2+) as cofactor. In terms of tissue distribution, expressed by the venom gland.

Its subcellular location is the secreted. With respect to regulation, inhibited by EDTA and diisopropyl fluorophosphate (DFP). Also inhibited by an excess of zinc or calcium ions. Its function is as follows. Snake venom zinc metalloproteinase that inhibits platelet aggregation by cleaving platelet glycoprotein Ib alpha (GP1BA) at Glu-298/Asp-299, and abolishes binding of von Willebrand factor (VWF) to GPIBA. Cleaves P-selectin glycoprotein ligand-1 (PSGL-1/SELPLG) at Tyr-51/Asp-52, and completely abolishes the binding of PSGL-1 to P-selectin. Anionic amino acid sequences containing sulfated tyrosines are needed for cleavages. Inhibits the thrombin-induced platelet aggregation, and the thrombin-induced release of ATP and ADP. Has lectin activity (inhibited by heparin). The sequence is that of Snake venom metalloproteinase-disintegrin-like mocarhagin from Naja mossambica (Mozambique spitting cobra).